Reading from the N-terminus, the 178-residue chain is MKALYLLGLLAFLYSCSSENVYDLQPESSEEENPGTFLEAIQEQSRTCVPRDGDCTENRKACCRSKIFQDRCQCRKVSQDKVACSCKQPYWLMKIEEILGDIPEKPKPVEGKCVKKHHDCSQRKNDCCPGSMENYTCKCYNTLEEGAKESEICGCVSKADHQILAQGFRYVKRLHDLR.

Positions 1 to 18 (MKALYLLGLLAFLYSCSS) are cleaved as a signal peptide. Residues 19–46 (ENVYDLQPESSEEENPGTFLEAIQEQSR) constitute a propeptide that is removed on maturation. The short motif at 43-46 (EQSR) is the Processing quadruplet motif element. 8 cysteine pairs are disulfide-bonded: C48/C63, C55/C72, C62/C86, C74/C84, C113/C128, C120/C137, C127/C155, and C139/C153.

The protein belongs to the spider toxin CSTX family. Double-CSTX subfamily. Cleavage of the propeptide depends on the processing quadruplet motif (XXXR, with at least one of X being E). Expressed by the venom gland.

It localises to the secreted. Spider venom toxin that exhibits cytolytic activity by forming an alpha-helix across the membrane. Lethal to insect larvae. This Cheiracanthium punctorium (Yellow sac spider) protein is DELTA-miturgitoxin-Cp3a.